A 394-amino-acid polypeptide reads, in one-letter code: Guanine nucleotide-binding protein G(s) subunit alpha (394 aa).

The interval 1–23 (MGCLGNSKTEDQRNEEKAQREAN) is disordered. Residue Gly-2 is the site of N-palmitoyl glycine attachment. Cys-3 carries S-palmitoyl cysteine lipidation. The span at 8–23 (KTEDQRNEEKAQREAN) shows a compositional bias: basic and acidic residues. One can recognise a G-alpha domain in the interval 39–394 (ATHRLLLLGA…RMHLRQYELL (356 aa)). Residues 42-55 (RLLLLGAGESGKST) form a G1 motif region. GTP is bound at residue 47–55 (GAGESGKST). Ser-54 serves as a coordination point for Mg(2+). The interval 68–91 (FNGEGGEEDPQAARSNSDGEKATK) is disordered. Residues 196–204 (DLLRCRVLT) form a G2 motif region. Residues 197–204 (LLRCRVLT), 223–227 (DVGGQ), 292–295 (NKQD), and Ala-366 contribute to the GTP site. Thr-204 provides a ligand contact to Mg(2+). The interval 219–228 (FHMFDVGGQR) is G3 motif. A G4 motif region spans residues 288-295 (ILFLNKQD). The tract at residues 364 to 369 (TCAVDT) is G5 motif.

Belongs to the G-alpha family. G(s) subfamily. Heterotrimeric G proteins are composed of 3 units; alpha, beta and gamma. The alpha chain contains the guanine nucleotide binding site. Interacts with CRY1; the interaction may block GPCR-mediated regulation of cAMP concentrations. Interacts with ADCY6 and stimulates its adenylyl cyclase activity. Interacts with ADCY2 and ADCY5. Stimulates the ADCY5 adenylyl cyclase activity. Interaction with SASH1.

It localises to the cell membrane. Its function is as follows. Guanine nucleotide-binding proteins (G proteins) function as transducers in numerous signaling pathways controlled by G protein-coupled receptors (GPCRs). Signaling involves the activation of adenylyl cyclases, resulting in increased levels of the signaling molecule cAMP. GNAS functions downstream of several GPCRs, including beta-adrenergic receptors. Stimulates the Ras signaling pathway via RAPGEF2. The polypeptide is Guanine nucleotide-binding protein G(s) subunit alpha (GNAS) (Canis lupus familiaris (Dog)).